An 87-amino-acid chain; its full sequence is UPF0250 protein YPK_3025 (87 aa).

Belongs to the UPF0250 family.

The chain is UPF0250 protein YPK_3025 from Yersinia pseudotuberculosis serotype O:3 (strain YPIII).